Here is a 265-residue protein sequence, read N- to C-terminus: Protein Msed_2121 (265 aa).

This sequence belongs to the CinA family.

This Metallosphaera sedula (strain ATCC 51363 / DSM 5348 / JCM 9185 / NBRC 15509 / TH2) protein is Protein Msed_2121.